We begin with the raw amino-acid sequence, 446 residues long: Tryptophan dimethylallyltransferase (446 aa).

L-tryptophan contacts are provided by residues 83–84 (IL) and glutamate 92. 3 residues coordinate substrate: arginine 103, lysine 189, and tyrosine 191. The L-tryptophan site is built by tyrosine 193 and arginine 246. Residues arginine 259, lysine 261, tyrosine 263, glutamine 345, and tyrosine 347 each contribute to the substrate site.

This sequence belongs to the tryptophan dimethylallyltransferase family. As to quaternary structure, homodimer.

It carries out the reaction L-tryptophan + dimethylallyl diphosphate = 4-(3-methylbut-2-enyl)-L-tryptophan + diphosphate. Its pathway is alkaloid biosynthesis; ergot alkaloid biosynthesis. Functionally, tryptophan dimethylallyltransferase; part of the gene cluster that mediates the biosynthesis of fungal ergot alkaloid. DmaW catalyzes the first step of ergot alkaloid biosynthesis by condensing dimethylallyl diphosphate (DMAP) and tryptophan to form 4-dimethylallyl-L-tryptophan. The second step is catalyzed by the methyltransferase easF that methylates 4-dimethylallyl-L-tryptophan in the presence of S-adenosyl-L-methionine, resulting in the formation of 4-dimethylallyl-L-abrine. The catalase easC and the FAD-dependent oxidoreductase easE then transform 4-dimethylallyl-L-abrine to chanoclavine-I which is further oxidized by easD in the presence of NAD(+), resulting in the formation of chanoclavine-I aldehyde. Chanoclavine-I aldehyde is the precursor of ergoamides and ergopeptines in Clavicipitaceae, and clavine-type alcaloids such as fumiclavine in Trichocomaceae. However, the metabolites downstream of chanoclavine-I aldehyde in Arthrodermataceae have not been identified yet. The chain is Tryptophan dimethylallyltransferase from Arthroderma otae (strain ATCC MYA-4605 / CBS 113480) (Microsporum canis).